The primary structure comprises 1390 residues: Nuclear pore complex protein 14 (1390 aa).

Polar residues-rich tracts occupy residues 434–455 (SQKPISAPPSDQTPVTKPSTVF) and 464–521 (LKSS…STPK). Disordered stretches follow at residues 434-530 (SQKP…KISD), 851-874 (PSSSLFSASPSTPSTKSDAATQAD), and 985-1118 (QEIE…SKAA). The span at 851 to 864 (PSSSLFSASPSTPS) shows a compositional bias: low complexity. Basic and acidic residues predominate over residues 986 to 1033 (EIEKASSKVETLNKTEEVKDEKSENEVTPDLKSEEPKSLETKVKEEPK). Low complexity predominate over residues 1051 to 1071 (KTPSFSFNSTTTPKSTSSTSS). Repeat unit 1 spans residues 1073-1074 (FG). Positions 1073–1373 (FGGGLKTQTP…TPAPTSSVFG (301 aa)) are 17 X 2 AA repeats of F-G. The span at 1078–1090 (KTQTPSSSNSTNI) shows a compositional bias: polar residues. Repeat 2 spans residues 1091–1092 (FG). The span at 1095 to 1109 (TTTTATPTPASNTSS) shows a compositional bias: low complexity. Repeat copies occupy residues 1111-1112 (FG), 1122-1123 (FG), 1125-1126 (FG), 1163-1164 (FG), 1166-1167 (FG), and 1178-1179 (FG). A disordered region spans residues 1183–1280 (TAPTVPNVDD…QASAPATGTS (98 aa)). A compositionally biased stretch (gly residues) spans 1201–1210 (NGGGSGGFMS). Low complexity predominate over residues 1231-1243 (TSTGTSASSSSWL). The stretch at 1244-1245 (FG) is repeat 9. Low complexity predominate over residues 1264-1280 (TAGSSAQQASAPATGTS). 8 tandem repeats follow at residues 1283–1284 (FG), 1289–1290 (FG), 1295–1296 (FG), 1300–1301 (FG), 1315–1316 (FG), 1344–1345 (FG), 1357–1358 (FG), and 1372–1373 (FG). Positions 1342 to 1371 (SLFGGGATPQTNTSIFGGGANTTPAPTSSV) are enriched in polar residues. The disordered stretch occupies residues 1342 to 1390 (SLFGGGATPQTNTSIFGGGANTTPAPTSSVFGGGASANANKPTSFTSWR). Residues 1378–1390 (ANANKPTSFTSWR) are compositionally biased toward polar residues.

As to quaternary structure, interacts with caspase ced-3 (via propeptide); the interaction tethers ced-3 to the nuclear membrane and prevents its autoprocessing in absence of ced-4.

It localises to the nucleus. It is found in the nuclear pore complex. The protein resides in the nucleus membrane. In terms of biological role, may serve as a docking site in the receptor-mediated import of substrates across the nuclear pore complex. Plays a role in apoptosis by tethering caspase ced-3 to the nuclear membrane preventing its autoprocessing in absence of ced-4. This Caenorhabditis elegans protein is Nuclear pore complex protein 14.